A 228-amino-acid chain; its full sequence is Cytokinin riboside 5'-monophosphate phosphoribohydrolase LOG5 (228 aa).

Residues glutamate 79, 97–98 (RK), and 114–120 (GYGTLEE) each bind substrate.

The protein belongs to the LOG family. As to expression, expressed in roots and shoots. Detected in vascular tissues of roots, cotyledons, and leaves, axillary buds, immature and mature flowers, fruit abscission zones and ovules.

It localises to the cytoplasm. It is found in the nucleus. The catalysed reaction is N(6)-(dimethylallyl)adenosine 5'-phosphate + H2O = N(6)-dimethylallyladenine + D-ribose 5-phosphate. The enzyme catalyses 9-ribosyl-trans-zeatin 5'-phosphate + H2O = trans-zeatin + D-ribose 5-phosphate. Functionally, cytokinin-activating enzyme working in the direct activation pathway. Phosphoribohydrolase that converts inactive cytokinin nucleotides to the biologically active free-base forms. This is Cytokinin riboside 5'-monophosphate phosphoribohydrolase LOG5 (LOG5) from Arabidopsis thaliana (Mouse-ear cress).